The chain runs to 375 residues: Succinyl-diaminopimelate desuccinylase (375 aa).

A Zn(2+)-binding site is contributed by His66. The active site involves Asp68. Asp99 serves as a coordination point for Zn(2+). Catalysis depends on Glu133, which acts as the Proton acceptor. Residues Glu134, Glu162, and His348 each contribute to the Zn(2+) site.

This sequence belongs to the peptidase M20A family. DapE subfamily. Homodimer. Zn(2+) serves as cofactor. Requires Co(2+) as cofactor.

The enzyme catalyses N-succinyl-(2S,6S)-2,6-diaminopimelate + H2O = (2S,6S)-2,6-diaminopimelate + succinate. The protein operates within amino-acid biosynthesis; L-lysine biosynthesis via DAP pathway; LL-2,6-diaminopimelate from (S)-tetrahydrodipicolinate (succinylase route): step 3/3. In terms of biological role, catalyzes the hydrolysis of N-succinyl-L,L-diaminopimelic acid (SDAP), forming succinate and LL-2,6-diaminopimelate (DAP), an intermediate involved in the bacterial biosynthesis of lysine and meso-diaminopimelic acid, an essential component of bacterial cell walls. In Klebsiella pneumoniae subsp. pneumoniae (strain ATCC 700721 / MGH 78578), this protein is Succinyl-diaminopimelate desuccinylase.